Reading from the N-terminus, the 273-residue chain is MAKANSSFSEVQIARRIKEGRGQGHGKDYIPWLTVQEVPSSGRSHRIYSHKTGRVHHLLSDLELAVFLSLEWESSVLDIREQFPLLPSDTRQIAIDSGIKHPVIRGVDQVMSTDFLVDCKDGPFEQFAIQVKPAAALQDERTLEKLELERRYWQQKQIPWFIFTDKEINPVVKENIEWLYSVKTEEVSAELLAQLSPLAHILQEKGDENIINVCKQVDIAYDLELGKTLSEIRALTANGFIKFNIYKSFRANKCADLCISQVVNMEELRYVAN.

Residues E63 and E73 contribute to the active site. The segment at residues 90 to 108 (TRQIAIDSGIKHPVIRGVD) is a DNA-binding region (H-T-H motif). D114 is an active-site residue. The Mg(2+) site is built by D114, Q130, and V131. The active site involves K132.

In terms of assembly, heteromer with TnsB. Interacts with TnsC (via C-terminus); this interaction allows TnsA to bind donor DNA. Mg(2+) serves as cofactor. Requires Mn(2+) as cofactor.

Functionally, required for Tn7 transposition. Forms the transposase, together with TnsB. TnsA executes the 5'-DNA strand breakage reaction. TnsABC and TnsD promote high-frequency insertion of Tn7 into a specific target site known as att-Tn7 whereas TnsABC and TnsE promote low-frequency insertion into many different sites. This Escherichia coli protein is Transposon Tn7 transposition protein TnsA.